A 554-amino-acid chain; its full sequence is HMG box-containing protein 4 (554 aa).

Disordered stretches follow at residues glycine 15–valine 368 and histidine 417–valine 469. Positions serine 75–alanine 88 are enriched in basic and acidic residues. Residues serine 95–alanine 105 show a composition bias toward low complexity. Residues threonine 113–histidine 123 are compositionally biased toward polar residues. 2 stretches are compositionally biased toward basic and acidic residues: residues proline 145–glycine 154 and leucine 217–serine 226. Positions tyrosine 236–glycine 251 are enriched in polar residues. The segment covering methionine 268–lysine 296 has biased composition (basic residues). Positions leucine 313–proline 332 are enriched in pro residues. Residues histidine 341 to lysine 357 show a composition bias toward basic and acidic residues. The segment at residues lysine 359–valine 427 is a DNA-binding region (HMG box). 2 stretches are compositionally biased toward low complexity: residues serine 433 to serine 445 and serine 454 to alanine 467.

In terms of assembly, interacts with nlk.2.

It is found in the nucleus. Functionally, negatively regulates Wnt/beta-catenin signaling during development. This chain is HMG box-containing protein 4 (hmgxb4), found in Xenopus laevis (African clawed frog).